Consider the following 185-residue polypeptide: NEDD8-conjugating enzyme UBE2F (185 aa).

A disordered region spans residues 1-21; sequence MLTLASKLKRDDGVKGSRTTS. The interaction with uba3 stretch occupies residues 1–29; the sequence is MLTLASKLKRDDGVKGSRTTSTTLDSMRR. The 154-residue stretch at 32-185 folds into the UBC core domain; sequence VRDRLLVKEV…VEDYIKRYAR (154 aa). Catalysis depends on cysteine 116, which acts as the Glycyl thioester intermediate.

Belongs to the ubiquitin-conjugating enzyme family. UBE2F subfamily.

It carries out the reaction [E1 NEDD8-activating enzyme]-S-[NEDD8 protein]-yl-L-cysteine + [E2 NEDD8-conjugating enzyme]-L-cysteine = [E1 NEDD8-activating enzyme]-L-cysteine + [E2 NEDD8-conjugating enzyme]-S-[NEDD8-protein]-yl-L-cysteine.. It functions in the pathway protein modification; protein neddylation. In terms of biological role, accepts the ubiquitin-like protein NEDD8 from the UBA3-NAE1 E1 complex and catalyzes its covalent attachment to other proteins. Together with the E3 ubiquitin ligase rnf7/rbx2, specifically neddylates cullin-5 (cul5). Does not neddylate cul1, cul2, cul3, cul4a or cul4b. This is NEDD8-conjugating enzyme UBE2F (ube2f) from Xenopus laevis (African clawed frog).